Reading from the N-terminus, the 254-residue chain is Translation initiation factor 2 subunit alpha (254 aa).

The 72-residue stretch at 10–81 (GDLVVVKITE…ERKVVDLSLK (72 aa)) folds into the S1 motif domain.

Belongs to the eIF-2-alpha family. As to quaternary structure, heterotrimer composed of an alpha, a beta and a gamma chain.

EIF-2 functions in the early steps of protein synthesis by forming a ternary complex with GTP and initiator tRNA. This is Translation initiation factor 2 subunit alpha from Thermoplasma acidophilum (strain ATCC 25905 / DSM 1728 / JCM 9062 / NBRC 15155 / AMRC-C165).